The chain runs to 147 residues: Large ribosomal subunit protein bL9 (147 aa).

It belongs to the bacterial ribosomal protein bL9 family.

Functionally, binds to the 23S rRNA. The chain is Large ribosomal subunit protein bL9 from Thermodesulfovibrio yellowstonii (strain ATCC 51303 / DSM 11347 / YP87).